The primary structure comprises 49 residues: Large ribosomal subunit protein bL33B (49 aa).

Belongs to the bacterial ribosomal protein bL33 family.

The protein is Large ribosomal subunit protein bL33B of Latilactobacillus sakei subsp. sakei (strain 23K) (Lactobacillus sakei subsp. sakei).